The sequence spans 291 residues: Putative butyrophilin-like protein 10 pseudogene (291 aa).

Positions 1–26 (MAVTCDPEAFLSICFVTLVFLQLPLA) are cleaved as a signal peptide. The region spanning 27–146 (SIWKADFDVT…GEATVQVQVA (120 aa)) is the Ig-like V-type domain. The Extracellular segment spans residues 27-254 (SIWKADFDVT…RSSQFTAWKA (228 aa)). A disulfide bridge connects residues Cys-54 and Cys-128. Residue Asn-59 is glycosylated (N-linked (GlcNAc...) asparagine). Residues 255-275 (ALPLILVAMGLVIAGGICIFW) traverse the membrane as a helical segment. At 276–291 (KRQREKNKASLEEERE) the chain is on the cytoplasmic side.

It belongs to the immunoglobulin superfamily. BTN/MOG family.

It localises to the membrane. The chain is Putative butyrophilin-like protein 10 pseudogene from Homo sapiens (Human).